The following is a 67-amino-acid chain: Large ribosomal subunit protein bL35 (67 aa).

Residues 1–16 (MPKMKTKSSAKKRFRV) show a composition bias toward basic residues. Residues 1–24 (MPKMKTKSSAKKRFRVRPGGTVKR) are disordered.

This sequence belongs to the bacterial ribosomal protein bL35 family.

This Delftia acidovorans (strain DSM 14801 / SPH-1) protein is Large ribosomal subunit protein bL35.